The chain runs to 353 residues: Protein pelota homolog (353 aa).

This sequence belongs to the eukaryotic release factor 1 family. Pelota subfamily. Monomer. Requires a divalent metal cation as cofactor.

It is found in the cytoplasm. In terms of biological role, may function in recognizing stalled ribosomes, interact with stem-loop structures in stalled mRNA molecules, and effect endonucleolytic cleavage of the mRNA. May play a role in the release non-functional ribosomes and degradation of damaged mRNAs. Has endoribonuclease activity. The protein is Protein pelota homolog of Methanobrevibacter smithii (strain ATCC 35061 / DSM 861 / OCM 144 / PS).